Here is a 236-residue protein sequence, read N- to C-terminus: Small ribosomal subunit protein uS2c (236 aa).

It belongs to the universal ribosomal protein uS2 family.

Its subcellular location is the plastid. It localises to the chloroplast. The polypeptide is Small ribosomal subunit protein uS2c (rps2) (Physcomitrium patens (Spreading-leaved earth moss)).